A 95-amino-acid polypeptide reads, in one-letter code: Aspartyl/glutamyl-tRNA(Asn/Gln) amidotransferase subunit C (95 aa).

This sequence belongs to the GatC family. In terms of assembly, heterotrimer of A, B and C subunits.

It catalyses the reaction L-glutamyl-tRNA(Gln) + L-glutamine + ATP + H2O = L-glutaminyl-tRNA(Gln) + L-glutamate + ADP + phosphate + H(+). The enzyme catalyses L-aspartyl-tRNA(Asn) + L-glutamine + ATP + H2O = L-asparaginyl-tRNA(Asn) + L-glutamate + ADP + phosphate + 2 H(+). Its function is as follows. Allows the formation of correctly charged Asn-tRNA(Asn) or Gln-tRNA(Gln) through the transamidation of misacylated Asp-tRNA(Asn) or Glu-tRNA(Gln) in organisms which lack either or both of asparaginyl-tRNA or glutaminyl-tRNA synthetases. The reaction takes place in the presence of glutamine and ATP through an activated phospho-Asp-tRNA(Asn) or phospho-Glu-tRNA(Gln). The chain is Aspartyl/glutamyl-tRNA(Asn/Gln) amidotransferase subunit C from Gluconobacter oxydans (strain 621H) (Gluconobacter suboxydans).